The primary structure comprises 602 residues: Laccase 1 (602 aa).

Residues 1–20 (MDHFARVSLVAALLYTNTWA) form the signal peptide. Plastocyanin-like domains lie at 30 to 128 (TWEE…VRPK) and 157 to 345 (YLVV…RIPN). Residues histidine 78, histidine 80, histidine 108, and histidine 110 each coordinate Cu cation. Residues asparagine 176, asparagine 241, asparagine 264, asparagine 388, asparagine 430, asparagine 454, and asparagine 470 are each glycosylated (N-linked (GlcNAc...) asparagine). The 124-residue stretch at 461 to 584 (NEGLLLRTRN…GGMGMVIMDG (124 aa)) folds into the Plastocyanin-like 3 domain. Positions 492, 495, and 497 each coordinate Cu cation. N-linked (GlcNAc...) asparagine glycosylation occurs at asparagine 512. Cu cation is bound by residues histidine 566, cysteine 567, histidine 568, and histidine 572.

This sequence belongs to the multicopper oxidase family. Requires Cu cation as cofactor.

It is found in the cell surface. It functions in the pathway pigment biosynthesis. Its function is as follows. Laccase; part of the Pks1 gene cluster that mediates the biosynthesis of an anthraquinone derivative pigment that contributes to conidial pigmentation that provides protection from UV radiation, heat and cold stress. The polyketide synthase Pks1 produces 1-acetyl-2,4,6,8-tetrahydroxy-9,10-anthraquinone though condensation of acetyl-CoA with malonyl-CoA. The dehydratase EthD and the laccase Mlac1 further convert the anthraquinone derivative into the final conidial pigment. In Metarhizium album (strain ARSEF 1941), this protein is Laccase 1.